We begin with the raw amino-acid sequence, 306 residues long: Tyrosine recombinase EUBREC_2677 (306 aa).

Positions 2–84 constitute a Core-binding (CB) domain; it reads NNLQTHISSY…SIKAFFHYLE (83 aa). Residues 106–296 form the Tyr recombinase domain; that stretch reads ILPKTIPLYI…AVSKQKDILI (191 aa). Catalysis depends on residues arginine 155, lysine 179, histidine 248, arginine 251, and histidine 274. The active-site O-(3'-phospho-DNA)-tyrosine intermediate is the tyrosine 283.

It belongs to the 'phage' integrase family.

The protein resides in the cytoplasm. Site-specific tyrosine recombinase, which acts by catalyzing the cutting and rejoining of the recombining DNA molecules. The sequence is that of Tyrosine recombinase EUBREC_2677 from Agathobacter rectalis (strain ATCC 33656 / DSM 3377 / JCM 17463 / KCTC 5835 / VPI 0990) (Eubacterium rectale).